Consider the following 511-residue polypeptide: MKCLLYLAFLSIGVNCKFTIVFPHNQKGTWKNVPSNYHYCPSSSDLNWHNDLIGTALQVKMPKSHKAIQADGWMCHASKWVTTCDFRWYGPKYITHSIRSFTPSVEQCRESIEQTKQGTWLNPGFPPQSCGYATVTDAEAVIVQVTPHHVLVDEYTGEWVDSQFINGKCSNDICPTVHNSTTWHSDYKVKGLCDSNLISMDITFFSEDGELSSLGKEGTGFRSNHFAYETGDKACKMQYCKHWGVRLPSGVWFEMADQDLFAAARFPECPEGSSISAPSQTSVDVSLIQDVERILDYSLCQETWSKIGAGLPISPVDLSYLAPKNPGTGPAFTIINGTLKYFETRYIRVDIAAPILSRMVGMISGTTTERELWDDWAPYEDVEIGPNGVLRTSSGYKFPLYMIGHGMLDSDLHLSSKAQVFEHPHIQDAASQLPDDETLFFGDTGLSKNPIELVEGWFSGWKSSIASFFFIIGLIIGLFLVLRVGIYLCIKLKHTKKRQIYTDIEMNRLGK.

Positions 1-16 (MKCLLYLAFLSIGVNC) are cleaved as a signal peptide. Residues 17 to 467 (KFTIVFPHNQ…FSGWKSSIAS (451 aa)) are Virion surface-facing. A trimerization region spans residues 18–35 (FTIVFPHNQKGTWKNVPS). Intrachain disulfides connect Cys40-Cys300, Cys75-Cys108, Cys84-Cys130, Cys169-Cys174, Cys193-Cys240, and Cys235-Cys269. The tract at residues 53 to 172 (IGTALQVKMP…QFINGKCSND (120 aa)) is fusion peptide. N-linked (GlcNAc...) asparagine; by host glycosylation is present at Asn179. Residues 259-309 (DLFAAARFPECPEGSSISAPSQTSVDVSLIQDVERILDYSLCQETWSKIGA) form a trimerization region. N-linked (GlcNAc...) asparagine; by host glycosylation is present at Asn336. A trimerization region spans residues 383–405 (EIGPNGVLRTSSGYKFPLYMIGH). A helical membrane pass occupies residues 468–488 (FFFIIGLIIGLFLVLRVGIYL). The S-palmitoyl cysteine; by host moiety is linked to residue Cys489. Residues 489-511 (CIKLKHTKKRQIYTDIEMNRLGK) lie on the Intravirion side of the membrane. The short motif at 496–506 (KKRQIYTDIEM) is the basolateral targeting ex vivo element.

Belongs to the vesiculovirus glycoprotein family. Homotrimer. Interacts with host LDL at target cell surface. Glycosylated by host. Palmitoylated by host.

The protein resides in the virion membrane. It is found in the host membrane. Attaches the virus to host LDL receptors, inducing clathrin-dependent endocytosis of the virion. In the endosome, the acidic pH induces conformational changes in the glycoprotein trimer, which trigger fusion between virus and endosomal membrane. The chain is Glycoprotein (G) from Aedes (Bovine).